The primary structure comprises 1252 residues: DNA-directed RNA polymerase subunit beta (1252 aa).

Belongs to the RNA polymerase beta chain family. As to quaternary structure, the RNAP catalytic core consists of 2 alpha, 1 beta, 1 beta' and 1 omega subunit. When a sigma factor is associated with the core the holoenzyme is formed, which can initiate transcription.

It catalyses the reaction RNA(n) + a ribonucleoside 5'-triphosphate = RNA(n+1) + diphosphate. DNA-dependent RNA polymerase catalyzes the transcription of DNA into RNA using the four ribonucleoside triphosphates as substrates. The chain is DNA-directed RNA polymerase subunit beta from Chlamydia trachomatis serovar D (strain ATCC VR-885 / DSM 19411 / UW-3/Cx).